The chain runs to 176 residues: ATP-dependent protease subunit HslV (176 aa).

Residue Thr5 is part of the active site. Residues Ala161, Cys164, and Thr167 each coordinate Na(+).

It belongs to the peptidase T1B family. HslV subfamily. A double ring-shaped homohexamer of HslV is capped on each side by a ring-shaped HslU homohexamer. The assembly of the HslU/HslV complex is dependent on binding of ATP.

The protein localises to the cytoplasm. It catalyses the reaction ATP-dependent cleavage of peptide bonds with broad specificity.. With respect to regulation, allosterically activated by HslU binding. Its function is as follows. Protease subunit of a proteasome-like degradation complex believed to be a general protein degrading machinery. The protein is ATP-dependent protease subunit HslV of Pelotomaculum thermopropionicum (strain DSM 13744 / JCM 10971 / SI).